Reading from the N-terminus, the 304-residue chain is Non-specific ribonucleoside hydrolase RihC (304 aa).

The active site involves histidine 233.

This sequence belongs to the IUNH family. RihC subfamily.

Its function is as follows. Hydrolyzes both purine and pyrimidine ribonucleosides with a broad-substrate specificity. This Escherichia coli O157:H7 protein is Non-specific ribonucleoside hydrolase RihC.